Here is a 215-residue protein sequence, read N- to C-terminus: RNA pyrophosphohydrolase (215 aa).

A Nudix hydrolase domain is found at Gly-6–Thr-149. Residues Gly-38–Gly-59 carry the Nudix box motif.

It belongs to the Nudix hydrolase family. RppH subfamily. It depends on a divalent metal cation as a cofactor.

Accelerates the degradation of transcripts by removing pyrophosphate from the 5'-end of triphosphorylated RNA, leading to a more labile monophosphorylated state that can stimulate subsequent ribonuclease cleavage. The sequence is that of RNA pyrophosphohydrolase from Burkholderia multivorans (strain ATCC 17616 / 249).